We begin with the raw amino-acid sequence, 349 residues long: Ferredoxin--NADP reductase 1 (349 aa).

The FAD site is built by Glu-36, Lys-44, Tyr-48, Val-88, Leu-123, Asp-290, and Ser-331.

The protein belongs to the ferredoxin--NADP reductase type 2 family. Homodimer. Requires FAD as cofactor.

The catalysed reaction is 2 reduced [2Fe-2S]-[ferredoxin] + NADP(+) + H(+) = 2 oxidized [2Fe-2S]-[ferredoxin] + NADPH. This chain is Ferredoxin--NADP reductase 1, found in Bacillus licheniformis (strain ATCC 14580 / DSM 13 / JCM 2505 / CCUG 7422 / NBRC 12200 / NCIMB 9375 / NCTC 10341 / NRRL NRS-1264 / Gibson 46).